The following is an 869-amino-acid chain: Leucine--tRNA ligase (869 aa).

Residues 42-52 carry the 'HIGH' region motif; that stretch reads PYPSGRLHMGH. The short motif at 620–624 is the 'KMSKS' region element; that stretch reads KMSKS. Lys623 contacts ATP.

Belongs to the class-I aminoacyl-tRNA synthetase family.

The protein resides in the cytoplasm. The enzyme catalyses tRNA(Leu) + L-leucine + ATP = L-leucyl-tRNA(Leu) + AMP + diphosphate. The polypeptide is Leucine--tRNA ligase (Hamiltonella defensa subsp. Acyrthosiphon pisum (strain 5AT)).